A 153-amino-acid polypeptide reads, in one-letter code: Endoribonuclease YbeY (153 aa).

Zn(2+) is bound by residues H114, H118, and H124.

Belongs to the endoribonuclease YbeY family. Requires Zn(2+) as cofactor.

The protein resides in the cytoplasm. In terms of biological role, single strand-specific metallo-endoribonuclease involved in late-stage 70S ribosome quality control and in maturation of the 3' terminus of the 16S rRNA. In Shewanella oneidensis (strain ATCC 700550 / JCM 31522 / CIP 106686 / LMG 19005 / NCIMB 14063 / MR-1), this protein is Endoribonuclease YbeY.